We begin with the raw amino-acid sequence, 32 residues long: Secreted protein F2 (32 aa).

The protein resides in the secreted. This Globisporangium hypogynum (Pythium hypogynum) protein is Secreted protein F2.